The sequence spans 253 residues: uncharacterized protein (253 aa).

This sequence belongs to the NAD(P)-dependent epimerase/dehydratase family.

This is an uncharacterized protein from Bacillus subtilis (strain 168).